The primary structure comprises 193 residues: Dual-action ribosomal maturation protein DarP (193 aa).

Residues 1–10 are compositionally biased toward basic and acidic residues; the sequence is MRGRDEDTGE. 2 disordered regions span residues 1–20 and 170–193; these read MRGR…SQQR and SQKP…ENDE. Over residues 181–193 the composition is skewed to acidic residues; sequence GLEDEESASENDE.

This sequence belongs to the DarP family.

It is found in the cytoplasm. Member of a network of 50S ribosomal subunit biogenesis factors which assembles along the 30S-50S interface, preventing incorrect 23S rRNA structures from forming. Promotes peptidyl transferase center (PTC) maturation. The chain is Dual-action ribosomal maturation protein DarP from Xanthomonas campestris pv. campestris (strain 8004).